The primary structure comprises 293 residues: Phospholipid scramblase 2 (293 aa).

Residues 1–39 (MDKQNVQMNPPHPGTNLTGPPGHIGYPGPQAGYAVPPPG) form a disordered region. The segment at 1–66 (MDKQNVQMNP…GHPGAPTQVP (66 aa)) is proline-rich domain (PRD). Topologically, residues 1–270 (MDKQNVQMNP…IQFPLDLDVK (270 aa)) are cytoplasmic. A Phosphothreonine; by PKC modification is found at threonine 143. S-palmitoyl cysteine attachment occurs at residues cysteine 166, cysteine 167, cysteine 170, and cysteine 171. Residues 271 to 287 (MKAVMLGACFLIDFMFF) form a helical membrane-spanning segment. Topologically, residues 288 to 293 (EMTRGE) are extracellular.

It belongs to the phospholipid scramblase family. It depends on Ca(2+) as a cofactor.

It localises to the membrane. It carries out the reaction a 1,2-diacyl-sn-glycero-3-phosphocholine(in) = a 1,2-diacyl-sn-glycero-3-phosphocholine(out). In terms of biological role, may catalyze calcium-induced ATP-independent rapid bidirectional and non-specific movement of phospholipids (lipid scrambling or lipid flip-flop) between the inner and outer leaflet of the plasma membrane. The polypeptide is Phospholipid scramblase 2 (Bos taurus (Bovine)).